The following is a 439-amino-acid chain: Ribosomal protein uS12 methylthiotransferase RimO (439 aa).

Positions 2–114 (SKLYLMSLGC…IDEMILKKTN (113 aa)) constitute an MTTase N-terminal domain. [4Fe-4S] cluster contacts are provided by Cys-11, Cys-45, Cys-77, Cys-146, Cys-150, and Cys-153. Residues 132–363 (TGSNSHAFIK…VDEVIEKSFE (232 aa)) enclose the Radical SAM core domain.

The protein belongs to the methylthiotransferase family. RimO subfamily. [4Fe-4S] cluster is required as a cofactor.

The protein resides in the cytoplasm. The catalysed reaction is L-aspartate(89)-[ribosomal protein uS12]-hydrogen + (sulfur carrier)-SH + AH2 + 2 S-adenosyl-L-methionine = 3-methylsulfanyl-L-aspartate(89)-[ribosomal protein uS12]-hydrogen + (sulfur carrier)-H + 5'-deoxyadenosine + L-methionine + A + S-adenosyl-L-homocysteine + 2 H(+). Catalyzes the methylthiolation of an aspartic acid residue of ribosomal protein uS12. The protein is Ribosomal protein uS12 methylthiotransferase RimO of Campylobacter jejuni subsp. jejuni serotype O:6 (strain 81116 / NCTC 11828).